We begin with the raw amino-acid sequence, 399 residues long: N-acetylglucosamine-6-phosphate deacetylase (399 aa).

Residues H65, H67, and E135 each coordinate a divalent metal cation. Residue 146–147 (AH) participates in substrate binding. H201 and H222 together coordinate a divalent metal cation. Residues 225–226 (NG), R233, and 254–257 (DGHH) contribute to the substrate site. Residue D279 participates in a divalent metal cation binding. The active-site Proton donor/acceptor is the D279. Residue 312 to 314 (LAG) coordinates substrate.

The protein belongs to the metallo-dependent hydrolases superfamily. NagA family. As to quaternary structure, homodimer. A divalent metal cation is required as a cofactor.

It carries out the reaction N-acetyl-D-glucosamine 6-phosphate + H2O = D-glucosamine 6-phosphate + acetate. Its pathway is amino-sugar metabolism; N-acetylneuraminate degradation; D-fructose 6-phosphate from N-acetylneuraminate: step 4/5. Its function is as follows. Involved in the first committed step in the biosynthesis of amino-sugar-nucleotides. Catalyzes the hydrolysis of the N-acetyl group of N-acetylglucosamine-6-phosphate (GlcNAc-6-P) to yield glucosamine 6-phosphate and acetate. This is N-acetylglucosamine-6-phosphate deacetylase (manD) from Vibrio furnissii.